The sequence spans 942 residues: DNA mismatch repair protein MSH2 (942 aa).

An ATP-binding site is contributed by 667–674; it reads GPNMGGKS.

The protein belongs to the DNA mismatch repair MutS family. In terms of assembly, heterodimer of MSH2 and MSH6 (GTBP).

It is found in the nucleus. Functionally, involved in postreplication mismatch repair. Binds specifically to DNA containing mismatched nucleotides thus providing a target for the excision repair processes characteristic of postreplication mismatch repair. This is DNA mismatch repair protein MSH2 (MUS1) from Zea mays (Maize).